The sequence spans 419 residues: eIF5-mimic protein 2-A (419 aa).

Residues 1–15 (MNNQKQQKPTLTGQR) are compositionally biased toward polar residues. Residues 1–29 (MNNQKQQKPTLTGQRFKTRKRDEKERFDP) form a disordered region. The region spanning 247–414 (NQQSIGARKE…KNAEEESESE (168 aa)) is the W2 domain.

It belongs to the BZW family.

Functionally, translation initiation regulator which may repress repeat-associated non-AUG (RAN) initiated translation probably by acting as a competitive inhibitor of eukaryotic translation initiation factor 5 (EIF5) function. Enhances histone H4 gene transcription but does not seem to bind DNA directly. This Danio rerio (Zebrafish) protein is eIF5-mimic protein 2-A (bzw1a).